A 402-amino-acid polypeptide reads, in one-letter code: Flavohemoprotein (402 aa).

One can recognise a Globin domain in the interval 1-136 (MLSEKTIEIV…IADAFISIEA (136 aa)). H85 provides a ligand contact to heme b. Active-site charge relay system residues include Y95 and E135. Residues 147-402 (GGWKDFRNFV…EFFGPAASLQ (256 aa)) are reductase. Residues 150–260 (KDFRNFVVVK…SAPAGDFVLN (111 aa)) form the FAD-binding FR-type domain. Residues Y188 and 204–207 (RQYS) each bind FAD. 273–278 (GVGITP) is an NADP(+) binding site. 394–397 (FFGP) is a binding site for FAD.

This sequence belongs to the globin family. Two-domain flavohemoproteins subfamily. It in the C-terminal section; belongs to the flavoprotein pyridine nucleotide cytochrome reductase family. The cofactor is heme b. FAD is required as a cofactor.

It carries out the reaction 2 nitric oxide + NADPH + 2 O2 = 2 nitrate + NADP(+) + H(+). It catalyses the reaction 2 nitric oxide + NADH + 2 O2 = 2 nitrate + NAD(+) + H(+). Its function is as follows. Is involved in NO detoxification in an aerobic process, termed nitric oxide dioxygenase (NOD) reaction that utilizes O(2) and NAD(P)H to convert NO to nitrate, which protects the bacterium from various noxious nitrogen compounds. Therefore, plays a central role in the inducible response to nitrosative stress. The sequence is that of Flavohemoprotein from Bacillus anthracis.